The following is a 1170-amino-acid chain: MNELNTVSTNSSDSTKDGGTSNSPDDMDSAAAASHAIKKRTKASRACDQCRKKKIKCDYKDEKGVCSNCQRNGDRCSFDRVPLKRGPSKGYTRSTSHPRTNEIQDHNNSRSYNTFDNSNNTLNNNTGNSGDNGINSNTVPSTPSRSNSVLLPPLTQYIPQAGGIPPSFQNPAIQSTMPAGNIGQQQFWKVPYHEFQHQRKGSIDSLQSDISVRTLNPNEQLSYNTVQQSPITNKHTNDSGNANGSVTGSGSASGSGGYWSFIRTSGLLAPTDDHNGEQTRRSSSIPSLLRNTSNSLLLGGQPQLPPPQQQSQPQAHQQKLQQGQNLYSYSQFSQQQPYNPSISSFGQFAANGFHSRQGSVASEAMSPSAPAMFTSTSTNPVNVAQQTQRPQGQQVPQFSSELDGNKRRQSAPVSVTLSTDRLNGNENNNGEINNNNGSNNSGSSKDTSQHSQESVTTPVALEASSPGSTPQRSTKKRRKSYVSKKTKPKRDSSISITSKDSAHPMTTSSTIAYGQISDVDLIDTYYEFIHVGFPIIPLNKTTLTSDLLLVNTQPISNIHEVNSYVILWFRNSLELLVRVALKQKPGGKFFDNIVGVALSPSNDNNKAGFTTATARDDAEKTRRDSHNEVQDTLEVQSVFIAALNECFQKIVDIHPKFRENNDQISPKIKVIYLSTFILLNYILAFVGYDNSFVLGMSVTIFNEFKLYKLLLFPEPDINDVKPPVDEEVSTGNGNTKTSEFEIGSESAGHMNPSNSPNSMDENISHYSVLFKRLYVLLSVFDSLQSCAFGGPKLLNISIQGSTERFFSNDLGSKWCLEQSQLRLKSVLQSLKLGELMSELTRNRISMNGNRKPGFDITNSSSLLSEYVETQPLSVAQLFCKLLIGKHNFINCLLSLYDSEAGVYSDLTLDLSSKIADSLCSLISIILQVLTLILRLNPTNSIDFNYRPPNPPANNPTVQEGPSAMGSSPVAGNLSAAPPSEGNPDFYKKLLGLKQDTGTILSDLCRGIISPFAIAILHEVYNITELVKQMPTSLISIMMTATTTQNTQDTKKSQDLVMKLSNSMNEVVQITSVLTMIKPFKIFEHELNKPIMSLTGGLSSTTRNDVMWPKSGQGLRESSVMKTLLDERRTSGTQPTTAPVAAEEPRLENVALENFVSIGWKLLDDSELGWY.

Residues 1 to 22 show a composition bias toward polar residues; it reads MNELNTVSTNSSDSTKDGGTSN. Disordered regions lie at residues 1-47 and 77-149; these read MNEL…SRAC and SFDR…SNSV. The segment at residues 47-76 is a DNA-binding region (zn(2)-C6 fungal-type); that stretch reads CDQCRKKKIKCDYKDEKGVCSNCQRNGDRC. Residues 99–108 are compositionally biased toward basic and acidic residues; that stretch reads RTNEIQDHNN. The segment covering 113-138 has biased composition (low complexity); sequence NTFDNSNNTLNNNTGNSGDNGINSNT. Residues 139–149 are compositionally biased toward polar residues; that stretch reads VPSTPSRSNSV. Residues serine 202, serine 205, serine 208, and serine 229 each carry the phosphoserine modification. Disordered regions lie at residues 226 to 254, 269 to 288, 293 to 323, 384 to 506, and 944 to 977; these read VQQS…SASG, APTD…IPSL, SNSL…LQQG, AQQT…HPMT, and NYRP…SAAP. The span at 239-250 shows a compositional bias: low complexity; the sequence is SGNANGSVTGSG. Residues 271-280 are compositionally biased toward basic and acidic residues; sequence TDDHNGEQTR. A phosphoserine mark is found at serine 283 and serine 284. Composition is skewed to low complexity over residues 293–302, 309–323, and 385–397; these read SNSLLLGGQP, QQSQ…LQQG, and QQTQ…QVPQ. Phosphoserine is present on residues serine 410 and serine 414. The span at 411-422 shows a compositional bias: polar residues; it reads APVSVTLSTDRL. Low complexity predominate over residues 424–444; sequence GNENNNGEINNNNGSNNSGSS. The span at 445–457 shows a compositional bias: polar residues; that stretch reads KDTSQHSQESVTT. A compositionally biased stretch (basic residues) spans 473–488; it reads STKKRRKSYVSKKTKP. Over residues 493–506 the composition is skewed to polar residues; sequence SISITSKDSAHPMT. Residue serine 1130 is modified to Phosphoserine.

The protein belongs to the EDS1/RGT1 family. Glucose-induced phosphorylation regulates the DNA-binding activity. Hyperphosphorylation in cells growing on high levels of glucose does prevents DNA-binding and dephosphorylation restores DNA-binding ability.

Its subcellular location is the nucleus. It localises to the cytoplasm. Functionally, glucose-responsive transcription factor that regulates expression of several glucose transporter (HXT) genes in response to glucose. In the absence of glucose, it functions as a transcriptional repressor, whereas high concentrations of glucose cause it to function as a transcriptional activator. In cells growing on low levels of glucose, has a neutral role, neither repressing nor activating transcription. Binds the consensus binding site sequence 5'-CGGANNA-3', of which multiple copies are present in all HXT promoters regulated by RGT1. This is Glucose transport transcription regulator RGT1 (RGT1) from Saccharomyces cerevisiae (strain JAY291) (Baker's yeast).